We begin with the raw amino-acid sequence, 462 residues long: Argininosuccinate lyase (462 aa).

The protein belongs to the lyase 1 family. Argininosuccinate lyase subfamily.

Its subcellular location is the cytoplasm. The enzyme catalyses 2-(N(omega)-L-arginino)succinate = fumarate + L-arginine. Its pathway is amino-acid biosynthesis; L-arginine biosynthesis; L-arginine from L-ornithine and carbamoyl phosphate: step 3/3. In Prochlorococcus marinus (strain SARG / CCMP1375 / SS120), this protein is Argininosuccinate lyase.